The sequence spans 967 residues: Leucine--tRNA ligase (967 aa).

The 'HIGH' region motif lies at proline 43–histidine 53. Positions lysine 650–serine 654 match the 'KMSKS' region motif. An ATP-binding site is contributed by lysine 653.

This sequence belongs to the class-I aminoacyl-tRNA synthetase family.

It localises to the cytoplasm. It carries out the reaction tRNA(Leu) + L-leucine + ATP = L-leucyl-tRNA(Leu) + AMP + diphosphate. This Pyrococcus horikoshii (strain ATCC 700860 / DSM 12428 / JCM 9974 / NBRC 100139 / OT-3) protein is Leucine--tRNA ligase.